We begin with the raw amino-acid sequence, 446 residues long: Pre-rRNA-processing protein crb3/ipi3 (446 aa).

5 WD repeats span residues 74-113 (ILPE…LIYF), 116-155 (AHYQ…DQNS), 172-214 (GHKR…LLTT), 216-257 (ALPS…SNNV), and 294-333 (SCQS…VLRR).

This sequence belongs to the WD repeat IPI3/WDR18 family. As to quaternary structure, component of the RIX1 complex, composed of ipi1, rix1/ipi2 and crb3/ipi3 in a 1:2:2 stoichiometry. The complex interacts (via rix1) with mdn1 (via its hexameric AAA ATPase ring) and the pre-60S ribosome particles. Interacts with rix1, gcr3 and Las1.

It localises to the nucleus. The protein resides in the chromosome. Functionally, required for both pre-rRNA processing and heterochromatic gene silencing. Component of the RIX1 complex required for processing of ITS2 sequences from 35S pre-rRNA. The polypeptide is Pre-rRNA-processing protein crb3/ipi3 (crb3) (Schizosaccharomyces pombe (strain 972 / ATCC 24843) (Fission yeast)).